A 926-amino-acid polypeptide reads, in one-letter code: Disease resistance protein RPM1 (926 aa).

The interval I10–L45 is leucine-zipper. Residues D153–G467 enclose the NB-ARC domain. Residue G200 to T207 coordinates ATP. 11 LRR repeats span residues L561–L580, N581–M603, N605–K625, L626–L649, L686–Q707, L708–I731, T756–T777, L778–R804, F825–M836, K837–A859, and L876–R900.

The protein belongs to the disease resistance NB-LRR family. In terms of assembly, interacts directly with RIN4 via its N-terminal region. Interacts (via N-terminus) with RIN2 and RIN3 (via C-terminus). Interacts with TIP49A, a protein known to interact with the TATA binding protein complex (TBP). Binds to MORC1/CRT1. Interacts, via its NB-ARC domain, with RIN13.

It localises to the endomembrane system. The protein localises to the cell membrane. Its function is as follows. Disease resistance (R) protein that specifically recognizes the AvrRpm1 type III effector avirulence protein from Pseudomonas syringae. Resistance proteins guard the plant against pathogens that contain an appropriate avirulence protein via an indirect interaction with this avirulence protein. That triggers a defense system including the hypersensitive response (HR), which restricts the pathogen growth. Acts via its interaction with RIN4, and probably triggers the plant resistance when RIN4 is phosphorylated by AvrRpm1. It is then degraded at the onset of the hypersensitive response. This chain is Disease resistance protein RPM1, found in Arabidopsis thaliana (Mouse-ear cress).